The following is a 293-amino-acid chain: Eukaryotic translation initiation factor 3 subunit F (293 aa).

Ala-2 bears the N-acetylalanine mark. The MPN domain maps to 28–159; sequence ARIHPLVIFN…IKAFVSSNLS (132 aa).

It belongs to the eIF-3 subunit F family. As to quaternary structure, component of the eukaryotic translation initiation factor 3 (eIF-3) complex. Binds to TIF3E1 and TIF3H1. In terms of tissue distribution, expressed in inflorescences, leaves, stems, siliques, roots and seedlings. Accumulates at highly levels in pollen grains, developing embryos and root tips.

The protein resides in the cytoplasm. Its function is as follows. Component of the eukaryotic translation initiation factor 3 (eIF-3) complex, which is involved in protein synthesis of a specialized repertoire of mRNAs and, together with other initiation factors, stimulates binding of mRNA and methionyl-tRNAi to the 40S ribosome. The eIF-3 complex specifically targets and initiates translation of a subset of mRNAs involved in cell proliferation (Potential). Involved in cell growth and differentiation, especially during embryogenesis and male gametophyte germination. Regulates sensitivity to sugars (e.g. sucrose). This Arabidopsis thaliana (Mouse-ear cress) protein is Eukaryotic translation initiation factor 3 subunit F (TIF3F1).